The primary structure comprises 108 residues: MMKNQLAGLMKQAQAMQDNMKKMQEQLALIEVEGQSGAGLVKIVMSCKNDVKRVSIDPSLLADDKDMLEDLVAAAFNDAVRKAEATSQEKMAGATAGMPMPPGFKMPF.

Residues 86–108 (TSQEKMAGATAGMPMPPGFKMPF) are disordered. Pro residues predominate over residues 99 to 108 (PMPPGFKMPF).

The protein belongs to the YbaB/EbfC family. In terms of assembly, homodimer.

The protein localises to the cytoplasm. The protein resides in the nucleoid. Its function is as follows. Binds to DNA and alters its conformation. May be involved in regulation of gene expression, nucleoid organization and DNA protection. The chain is Nucleoid-associated protein HEAR1046 from Herminiimonas arsenicoxydans.